A 274-amino-acid chain; its full sequence is Rhamnulose-1-phosphate aldolase (274 aa).

The active site involves glutamate 117. Zn(2+) is bound by residues histidine 141, histidine 143, and histidine 212.

Belongs to the aldolase class II family. RhaD subfamily. Homotetramer. Zn(2+) serves as cofactor.

It is found in the cytoplasm. It catalyses the reaction L-rhamnulose 1-phosphate = (S)-lactaldehyde + dihydroxyacetone phosphate. Its pathway is carbohydrate degradation; L-rhamnose degradation; glycerone phosphate from L-rhamnose: step 3/3. Functionally, catalyzes the reversible cleavage of L-rhamnulose-1-phosphate to dihydroxyacetone phosphate (DHAP) and L-lactaldehyde. The sequence is that of Rhamnulose-1-phosphate aldolase from Yersinia pseudotuberculosis serotype IB (strain PB1/+).